A 981-amino-acid chain; its full sequence is Rab3 GTPase-activating protein catalytic subunit (981 aa).

S83, S379, S537, S579, S581, and S590 each carry phosphoserine. The segment at 592-613 (TEELKGNGQESGKKGGPKEMAN) is disordered. S664 carries the post-translational modification Phosphoserine. Phosphothreonine is present on T908. The disordered stretch occupies residues 908 to 937 (TPPEEELKRMGSPEERRQNSVSDFPPPAGR). The segment covering 912-925 (EELKRMGSPEERRQ) has biased composition (basic and acidic residues).

This sequence belongs to the Rab3-GAP catalytic subunit family. In terms of assembly, the Rab3 GTPase-activating complex is a heterodimer composed of RAB3GAP1 and RAB3GAP2. The Rab3 GTPase-activating complex interacts with DMXL2. Interacts with LMAN1. Ubiquitous.

Its subcellular location is the cytoplasm. It localises to the endoplasmic reticulum. It is found in the golgi apparatus. The protein resides in the cis-Golgi network. In terms of biological role, catalytic subunit of the Rab3 GTPase-activating (Rab3GAP) complex composed of RAB3GAP1 and RAB3GAP2, which has GTPase-activating protein (GAP) activity towards various Rab3 subfamily members (RAB3A, RAB3B, RAB3C and RAB3D), RAB5A and RAB43, and guanine nucleotide exchange factor (GEF) activity towards RAB18. As part of the Rab3GAP complex, acts as a GAP for Rab3 proteins by converting active RAB3-GTP to the inactive form RAB3-GDP. Rab3 proteins are involved in regulated exocytosis of neurotransmitters and hormones. The Rab3GAP complex, acts as a GEF for RAB18 by promoting the conversion of inactive RAB18-GDP to the active form RAB18-GTP. Recruits and stabilizes RAB18 at the cis-Golgi membrane in fibroblasts where RAB18 is most likely activated. Also involved in RAB18 recruitment at the endoplasmic reticulum (ER) membrane where it maintains proper ER structure. Required for normal eye and brain development. May participate in neurodevelopmental processes such as proliferation, migration and differentiation before synapse formation, and non-synaptic vesicular release of neurotransmitters. In Homo sapiens (Human), this protein is Rab3 GTPase-activating protein catalytic subunit.